Reading from the N-terminus, the 188-residue chain is Large ribosomal subunit protein bL32m (188 aa).

Cysteine 110, cysteine 113, cysteine 123, and cysteine 126 together coordinate Zn(2+). The segment at 164–188 is disordered; it reads TPSEQDQGKRIIERDRKRPSWFTQN. The segment covering 169–181 has biased composition (basic and acidic residues); it reads DQGKRIIERDRKR.

The protein belongs to the bacterial ribosomal protein bL32 family. Component of the mitochondrial large ribosomal subunit (mt-LSU). Mature mammalian 55S mitochondrial ribosomes consist of a small (28S) and a large (39S) subunit. The 28S small subunit contains a 12S ribosomal RNA (12S mt-rRNA) and 30 different proteins. The 39S large subunit contains a 16S rRNA (16S mt-rRNA), a copy of mitochondrial valine transfer RNA (mt-tRNA(Val)), which plays an integral structural role, and 52 different proteins. bL32m has a zinc binding site. Post-translationally, MRPL32 precursor is processed by the m-AAA protease (composed of AFG3L2 and SPG7), which cleaves the N-terminal transit peptide. Cleavage by the m-AAA protease takes place prior to assembly into the large subunit, an essential step for mitochondrial ribosome (mitoribosome) assembly. Proper processing by the m-AAA protease is dependent on the zinc-binding region within the tightly folded C-terminal domain of MRPL32: zinc-dependent folding halts degradation initiated from the N-terminus and triggers the release of mature MRPL32.

It localises to the mitochondrion. In terms of biological role, component of the mitochondrial large ribosomal subunit (mt-LSU). The mitochondrial ribosome (mitoribosome) is a large ribonucleoprotein complex responsible for the synthesis of proteins inside mitochondria. The sequence is that of Large ribosomal subunit protein bL32m (MRPL32) from Homo sapiens (Human).